A 511-amino-acid polypeptide reads, in one-letter code: Cytochrome P450 26B1 (511 aa).

A heme-binding site is contributed by Cys440.

Belongs to the cytochrome P450 family. It depends on heme as a cofactor.

It is found in the endoplasmic reticulum membrane. Its subcellular location is the microsome membrane. The enzyme catalyses all-trans-retinoate + reduced [NADPH--hemoprotein reductase] + O2 = all-trans-4-hydroxyretinoate + oxidized [NADPH--hemoprotein reductase] + H2O + H(+). The catalysed reaction is all-trans-retinoate + reduced [NADPH--hemoprotein reductase] + O2 = all-trans-18-hydroxyretinoate + oxidized [NADPH--hemoprotein reductase] + H2O + H(+). In terms of biological role, a cytochrome P450 monooxygenase involved in the metabolism of retinoates (RAs), the active metabolites of vitamin A, and critical signaling molecules in animals. RAs exist as at least four different isomers: all-trans-RA (atRA), 9-cis-RA, 13-cis-RA, and 9,13-dicis-RA, where atRA is considered to be the biologically active isomer, although 9-cis-RA and 13-cis-RA also have activity. Catalyzes the hydroxylation of atRA primarily at C-4 and C-18, thereby contributing to the regulation of atRA homeostasis and signaling. Hydroxylation of atRA limits its biological activity and initiates a degradative process leading to its eventual elimination. Involved in the convertion of atRA to all-trans-4-oxo-RA. Can oxidize all-trans-13,14-dihydroretinoate (DRA) to metabolites which could include all-trans-4-oxo-DRA, all-trans-4-hydroxy-DRA, all-trans-5,8-epoxy-DRA, and all-trans-18-hydroxy-DRA. Plays a role in skeletal development, both at the level of patterning and in the ossification of bone and the establishment of some synovial joints. The polypeptide is Cytochrome P450 26B1 (Danio rerio (Zebrafish)).